The sequence spans 195 residues: Molybdenum cofactor guanylyltransferase (195 aa).

GTP contacts are provided by residues Leu-10 to Gly-12, Lys-23, Asn-51, Asp-69, and Asp-99. Asp-99 is a Mg(2+) binding site.

The protein belongs to the MobA family. Monomer. Requires Mg(2+) as cofactor.

The protein localises to the cytoplasm. The catalysed reaction is Mo-molybdopterin + GTP + H(+) = Mo-molybdopterin guanine dinucleotide + diphosphate. In terms of biological role, transfers a GMP moiety from GTP to Mo-molybdopterin (Mo-MPT) cofactor (Moco or molybdenum cofactor) to form Mo-molybdopterin guanine dinucleotide (Mo-MGD) cofactor. This chain is Molybdenum cofactor guanylyltransferase, found in Histophilus somni (strain 2336) (Haemophilus somnus).